The sequence spans 462 residues: Cytochrome P450 20A1 (462 aa).

The chain crosses the membrane as a helical span at residues 4-24 (FAIFAVTFLLALVGAVLYLYP). Cys-409 contributes to the heme binding site.

This sequence belongs to the cytochrome P450 family. Heme is required as a cofactor.

Its subcellular location is the membrane. The sequence is that of Cytochrome P450 20A1 (CYP20A1) from Homo sapiens (Human).